The following is an 87-amino-acid chain: HssA/B-like protein 8 (87 aa).

Polar residues predominate over residues 1–22 (MSILSALTSISNPMKSTKSSVA). The tract at residues 1 to 24 (MSILSALTSISNPMKSTKSSVANG) is disordered.

Belongs to the hssA/B family.

The chain is HssA/B-like protein 8 (hssl8) from Dictyostelium discoideum (Social amoeba).